A 297-amino-acid chain; its full sequence is Polyamine aminopropyltransferase 2 (297 aa).

Residues 26–258 (FYWEPDVEGG…DLWTFFVALK (233 aa)) form the PABS domain. Residue Q53 participates in S-methyl-5'-thioadenosine binding. Residues H84 and E108 each contribute to the spermidine site. Residues D128 and 157 to 158 (DV) each bind S-methyl-5'-thioadenosine. D176 acts as the Proton acceptor in catalysis. P184 serves as a coordination point for S-methyl-5'-thioadenosine.

It belongs to the spermidine/spermine synthase family. Homodimer or homotetramer.

The protein localises to the cytoplasm. It carries out the reaction S-adenosyl 3-(methylsulfanyl)propylamine + putrescine = S-methyl-5'-thioadenosine + spermidine + H(+). It participates in amine and polyamine biosynthesis; spermidine biosynthesis; spermidine from putrescine: step 1/1. In terms of biological role, catalyzes the irreversible transfer of a propylamine group from the amino donor S-adenosylmethioninamine (decarboxy-AdoMet) to putrescine (1,4-diaminobutane) to yield spermidine. The polypeptide is Polyamine aminopropyltransferase 2 (Caldanaerobacter subterraneus subsp. tengcongensis (strain DSM 15242 / JCM 11007 / NBRC 100824 / MB4) (Thermoanaerobacter tengcongensis)).